The primary structure comprises 163 residues: Large ribosomal subunit protein uL10 (163 aa).

This sequence belongs to the universal ribosomal protein uL10 family. In terms of assembly, part of the ribosomal stalk of the 50S ribosomal subunit. The N-terminus interacts with L11 and the large rRNA to form the base of the stalk. The C-terminus forms an elongated spine to which L12 dimers bind in a sequential fashion forming a multimeric L10(L12)X complex.

Forms part of the ribosomal stalk, playing a central role in the interaction of the ribosome with GTP-bound translation factors. This Glaesserella parasuis serovar 5 (strain SH0165) (Haemophilus parasuis) protein is Large ribosomal subunit protein uL10.